Here is a 287-residue protein sequence, read N- to C-terminus: Co-chaperone protein DjlA (287 aa).

Residues 1 to 6 are Periplasmic-facing; it reads MQIFGK. A helical transmembrane segment spans residues 7–30; sequence ILGAFFGFLFGGVFGALFGLFIGH. The Cytoplasmic portion of the chain corresponds to 31–287; sequence QFDKARRLSQ…DLIKKEKGFK (257 aa). Positions 192-213 are disordered; it reads GGFGGQQHQSHHSSSHGGWQQA. Positions 221 to 287 constitute a J domain; sequence DAYKILGIDA…DLIKKEKGFK (67 aa).

As to quaternary structure, homodimer.

Its subcellular location is the cell inner membrane. Regulatory DnaK co-chaperone. Direct interaction between DnaK and DjlA is needed for the induction of the wcaABCDE operon, involved in the synthesis of a colanic acid polysaccharide capsule, possibly through activation of the RcsB/RcsC phosphotransfer signaling pathway. The colanic acid capsule may help the bacterium survive conditions outside the host. This is Co-chaperone protein DjlA from Vibrio vulnificus (strain CMCP6).